A 414-amino-acid chain; its full sequence is 2,3-diketo-5-methylthiopentyl-1-phosphate enolase (414 aa).

The Proton acceptor role is filled by Lys-99. Residues Lys-148, 174–177 (KDDE), His-265, Gly-338, and 360–361 (GG) contribute to the substrate site. Mg(2+) contacts are provided by Lys-174, Asp-176, and Glu-177. The residue at position 174 (Lys-174) is an N6-carboxylysine.

Belongs to the RuBisCO large chain family. Type IV subfamily. In terms of assembly, homodimer. Mg(2+) is required as a cofactor.

The catalysed reaction is 5-methylsulfanyl-2,3-dioxopentyl phosphate = 2-hydroxy-5-methylsulfanyl-3-oxopent-1-enyl phosphate. Its pathway is amino-acid biosynthesis; L-methionine biosynthesis via salvage pathway; L-methionine from S-methyl-5-thio-alpha-D-ribose 1-phosphate: step 3/6. Functionally, catalyzes the enolization of 2,3-diketo-5-methylthiopentyl-1-phosphate (DK-MTP-1-P) into 2-hydroxy-3-keto-5-methylthiopentenyl-1-phosphate (HK-MTPenyl-1-P). The sequence is that of 2,3-diketo-5-methylthiopentyl-1-phosphate enolase from Bacillus thuringiensis (strain Al Hakam).